We begin with the raw amino-acid sequence, 427 residues long: MSNNQTLFERAQRTIPGGVNSPVRAFRSVGGTPRFVARAQGAYFWDADGKRYIDYIGSWGPMIVGHVHPDVLAAVQHVLADGFSFGAPTEAEIEIAEEICKLVPSIEQVRMVSSGTEATMSALRLARGFTGRSRIVKFEGCYHGHADSLLVKAGSGLLTFGNPTSAGVPADVAKHTTVLEYNNVAALEEAFAAFGGEIAAVIVEPVAGNMNLVRGTPEFLNALRALTAKHGAVLIFDEVMCGFRVALGGAQQHYGITPDLTCLGKVIGGGMPAAAFGGRGDIMSHLAPLGGVYQAGTLSGNPVAVAAGLATLRLIQAPGFHDALADKTRRLADSLAAEARAAGVPFSADAIGGMFGLYFTEQVPASFADVTKSDIERFNRFFHLMLDAGVYFAPSAYEAGFVSSAHDDATLDATLDAARRAFAALRA.

K265 is modified (N6-(pyridoxal phosphate)lysine).

This sequence belongs to the class-III pyridoxal-phosphate-dependent aminotransferase family. HemL subfamily. Homodimer. Pyridoxal 5'-phosphate is required as a cofactor.

The protein resides in the cytoplasm. The catalysed reaction is (S)-4-amino-5-oxopentanoate = 5-aminolevulinate. It functions in the pathway porphyrin-containing compound metabolism; protoporphyrin-IX biosynthesis; 5-aminolevulinate from L-glutamyl-tRNA(Glu): step 2/2. In Burkholderia pseudomallei (strain 668), this protein is Glutamate-1-semialdehyde 2,1-aminomutase.